The sequence spans 227 residues: Cytochrome c oxidase subunit 2 (227 aa).

Topologically, residues 1-26 are mitochondrial intermembrane; it reads MATWSNFNLQNSASPLMEQIIFFHDH. Residues 27 to 51 traverse the membrane as a helical segment; that stretch reads TLVILIMITILVGYLMISLFFNSYI. Residues 52 to 62 are Mitochondrial matrix-facing; it reads NRFLLEGQMIE. The helical transmembrane segment at 63–81 threads the bilayer; that stretch reads LIWTILPAITLIFIALPSL. At 82-227 the chain is on the mitochondrial intermembrane side; the sequence is RLLYLLDELN…NFINWINNYS (146 aa). Cu cation-binding residues include H161, C196, E198, C200, H204, and M207. E198 is a binding site for Mg(2+).

Belongs to the cytochrome c oxidase subunit 2 family. In terms of assembly, component of the cytochrome c oxidase (complex IV, CIV), a multisubunit enzyme composed of a catalytic core of 3 subunits and several supernumerary subunits. The complex exists as a monomer or a dimer and forms supercomplexes (SCs) in the inner mitochondrial membrane with ubiquinol-cytochrome c oxidoreductase (cytochrome b-c1 complex, complex III, CIII). The cofactor is Cu cation.

It is found in the mitochondrion inner membrane. It carries out the reaction 4 Fe(II)-[cytochrome c] + O2 + 8 H(+)(in) = 4 Fe(III)-[cytochrome c] + 2 H2O + 4 H(+)(out). Component of the cytochrome c oxidase, the last enzyme in the mitochondrial electron transport chain which drives oxidative phosphorylation. The respiratory chain contains 3 multisubunit complexes succinate dehydrogenase (complex II, CII), ubiquinol-cytochrome c oxidoreductase (cytochrome b-c1 complex, complex III, CIII) and cytochrome c oxidase (complex IV, CIV), that cooperate to transfer electrons derived from NADH and succinate to molecular oxygen, creating an electrochemical gradient over the inner membrane that drives transmembrane transport and the ATP synthase. Cytochrome c oxidase is the component of the respiratory chain that catalyzes the reduction of oxygen to water. Electrons originating from reduced cytochrome c in the intermembrane space (IMS) are transferred via the dinuclear copper A center (CU(A)) of subunit 2 and heme A of subunit 1 to the active site in subunit 1, a binuclear center (BNC) formed by heme A3 and copper B (CU(B)). The BNC reduces molecular oxygen to 2 water molecules using 4 electrons from cytochrome c in the IMS and 4 protons from the mitochondrial matrix. The chain is Cytochrome c oxidase subunit 2 (COII) from Choristoneura fumiferana (Spruce budworm moth).